The sequence spans 189 residues: uncharacterized protein (189 aa).

It belongs to the mimivirus R457/R459 family.

Its subcellular location is the virion. This is an uncharacterized protein from Acanthamoeba polyphaga mimivirus (APMV).